The sequence spans 476 residues: Glutathione synthetase (476 aa).

Residue Arg117 participates in substrate binding. ATP is bound at residue Glu137. Mg(2+)-binding residues include Glu137 and Asn139. Substrate is bound by residues 141 to 144 (ISSS), 211 to 213 (ERN), Gln217, and 267 to 270 (RAGY). Residues Lys308, 367–376 (KPQREGGGNN), Tyr378, 400–403 (MDKI), and Glu426 each bind ATP. Residue Glu371 participates in Mg(2+) binding. Arg452 lines the substrate pocket. Residues Lys454 and Glu460 each contribute to the ATP site. 463–464 (VA) contacts substrate.

Belongs to the eukaryotic GSH synthase family. As to quaternary structure, homodimer. Requires Mg(2+) as cofactor.

The enzyme catalyses gamma-L-glutamyl-L-cysteine + glycine + ATP = glutathione + ADP + phosphate + H(+). Its pathway is sulfur metabolism; glutathione biosynthesis; glutathione from L-cysteine and L-glutamate: step 2/2. This chain is Glutathione synthetase (gshB), found in Dictyostelium discoideum (Social amoeba).